The chain runs to 267 residues: MKKIYYKNHLIKKKWSQVFLKDQNVIDTIVKTINPKKHQKILEIGPGLGALTKQILNIADLDSLILIERDSNLVNRLVQMFNKKINILHQDIMTTNFFDLSHKVGQKLRLIGNLPYNIATELIVYLFQYTNVIYDMHFMFQKEVATRLYANPNKKEYGRLSIITQYHCKVVPLLTIPATSFFPIPKVESMVMRLLPHTNTPYPIVNIGKLSSLTKLAFRQRRKTLRNSLSTFFNETEITQKGINPALRAENITINQYCTLANMLNNK.

L20, G45, E68, D91, and N113 together coordinate S-adenosyl-L-methionine.

The protein belongs to the class I-like SAM-binding methyltransferase superfamily. rRNA adenine N(6)-methyltransferase family. RsmA subfamily.

It localises to the cytoplasm. It carries out the reaction adenosine(1518)/adenosine(1519) in 16S rRNA + 4 S-adenosyl-L-methionine = N(6)-dimethyladenosine(1518)/N(6)-dimethyladenosine(1519) in 16S rRNA + 4 S-adenosyl-L-homocysteine + 4 H(+). In terms of biological role, specifically dimethylates two adjacent adenosines (A1518 and A1519) in the loop of a conserved hairpin near the 3'-end of 16S rRNA in the 30S particle. May play a critical role in biogenesis of 30S subunits. The polypeptide is Ribosomal RNA small subunit methyltransferase A (Blochmanniella pennsylvanica (strain BPEN)).